Consider the following 316-residue polypeptide: Ribosomal protein L11 methyltransferase (316 aa).

Residues T157, G178, D200, and N243 each coordinate S-adenosyl-L-methionine.

It belongs to the methyltransferase superfamily. PrmA family.

The protein localises to the cytoplasm. The enzyme catalyses L-lysyl-[protein] + 3 S-adenosyl-L-methionine = N(6),N(6),N(6)-trimethyl-L-lysyl-[protein] + 3 S-adenosyl-L-homocysteine + 3 H(+). Methylates ribosomal protein L11. The chain is Ribosomal protein L11 methyltransferase from Streptococcus pneumoniae (strain 70585).